The sequence spans 697 residues: Elongation factor G 2 (697 aa).

The 276-residue stretch at 5-280 (SKYRNIGIFA…AVVDYLPAPN (276 aa)) folds into the tr-type G domain. GTP-binding positions include 14-21 (AHVDAGKT), 78-82 (DTPGH), and 132-135 (NKLD).

The protein belongs to the TRAFAC class translation factor GTPase superfamily. Classic translation factor GTPase family. EF-G/EF-2 subfamily.

The protein resides in the cytoplasm. Its function is as follows. Catalyzes the GTP-dependent ribosomal translocation step during translation elongation. During this step, the ribosome changes from the pre-translocational (PRE) to the post-translocational (POST) state as the newly formed A-site-bound peptidyl-tRNA and P-site-bound deacylated tRNA move to the P and E sites, respectively. Catalyzes the coordinated movement of the two tRNA molecules, the mRNA and conformational changes in the ribosome. This is Elongation factor G 2 from Shewanella sp. (strain MR-4).